The chain runs to 1192 residues: Integrator complex subunit 2 (1192 aa).

The chain crosses the membrane as a helical span at residues 420-436; sequence FVSLSFCMLLAFSTLVS.

The protein belongs to the Integrator subunit 2 family. As to quaternary structure, component of the Integrator complex, composed of core subunits INTS1, INTS2, INTS3, INTS4, INTS5, INTS6, INTS7, INTS8, INTS9/RC74, INTS10, INTS11/CPSF3L, INTS12, INTS13, INTS14 and INTS15. The core complex associates with protein phosphatase 2A subunits PPP2CA and PPP2R1A, to form the Integrator-PP2A (INTAC) complex.

The protein localises to the nucleus. Its subcellular location is the nucleus membrane. It localises to the cytoplasm. Its function is as follows. Component of the integrator complex, a multiprotein complex that terminates RNA polymerase II (Pol II) transcription in the promoter-proximal region of genes. The integrator complex provides a quality checkpoint during transcription elongation by driving premature transcription termination of transcripts that are unfavorably configured for transcriptional elongation: the complex terminates transcription by (1) catalyzing dephosphorylation of the C-terminal domain (CTD) of Pol II subunit POLR2A/RPB1 and SUPT5H/SPT5, (2) degrading the exiting nascent RNA transcript via endonuclease activity and (3) promoting the release of Pol II from bound DNA. The integrator complex is also involved in terminating the synthesis of non-coding Pol II transcripts, such as enhancer RNAs (eRNAs), small nuclear RNAs (snRNAs), telomerase RNAs and long non-coding RNAs (lncRNAs). The polypeptide is Integrator complex subunit 2 (INTS2) (Gallus gallus (Chicken)).